Here is a 227-residue protein sequence, read N- to C-terminus: 2,3-bisphosphoglycerate-dependent phosphoglycerate mutase (227 aa).

Substrate contacts are provided by residues 7-14 (RHGQSEWN), 20-21 (TG), Arg-59, 86-89 (ERHY), Lys-97, 113-114 (RR), and 182-183 (GN). His-8 (tele-phosphohistidine intermediate) is an active-site residue. Glu-86 (proton donor/acceptor) is an active-site residue.

The protein belongs to the phosphoglycerate mutase family. BPG-dependent PGAM subfamily. As to quaternary structure, homodimer.

The catalysed reaction is (2R)-2-phosphoglycerate = (2R)-3-phosphoglycerate. It functions in the pathway carbohydrate degradation; glycolysis; pyruvate from D-glyceraldehyde 3-phosphate: step 3/5. Its function is as follows. Catalyzes the interconversion of 2-phosphoglycerate and 3-phosphoglycerate. The sequence is that of 2,3-bisphosphoglycerate-dependent phosphoglycerate mutase from Neisseria meningitidis serogroup A / serotype 4A (strain DSM 15465 / Z2491).